The sequence spans 294 residues: Cytidine deaminase (294 aa).

2 consecutive CMP/dCMP-type deaminase domains span residues 48–168 and 186–294; these read DEDA…FGPK and LTGD…VLLG. 89–91 is a substrate binding site; sequence NME. Histidine 102 is a Zn(2+) binding site. The active-site Proton donor is glutamate 104. Residues cysteine 129 and cysteine 132 each contribute to the Zn(2+) site.

Belongs to the cytidine and deoxycytidylate deaminase family. As to quaternary structure, homodimer. Zn(2+) serves as cofactor.

It catalyses the reaction cytidine + H2O + H(+) = uridine + NH4(+). The catalysed reaction is 2'-deoxycytidine + H2O + H(+) = 2'-deoxyuridine + NH4(+). Functionally, this enzyme scavenges exogenous and endogenous cytidine and 2'-deoxycytidine for UMP synthesis. This chain is Cytidine deaminase, found in Salmonella choleraesuis (strain SC-B67).